Here is a 229-residue protein sequence, read N- to C-terminus: Small ribosomal subunit protein mS23 (229 aa).

This sequence belongs to the mitochondrion-specific ribosomal protein mS23 family. As to quaternary structure, component of the mitochondrial small ribosomal subunit.

Its subcellular location is the mitochondrion. This chain is Small ribosomal subunit protein mS23 (RSM25), found in Yarrowia lipolytica (strain CLIB 122 / E 150) (Yeast).